A 596-amino-acid chain; its full sequence is NADH-quinone oxidoreductase subunit C/D (596 aa).

The tract at residues Met1–Glu186 is NADH dehydrogenase I subunit C. The segment at Asp210–Arg596 is NADH dehydrogenase I subunit D.

It in the N-terminal section; belongs to the complex I 30 kDa subunit family. The protein in the C-terminal section; belongs to the complex I 49 kDa subunit family. In terms of assembly, NDH-1 is composed of 13 different subunits. Subunits NuoB, CD, E, F, and G constitute the peripheral sector of the complex.

Its subcellular location is the cell inner membrane. It carries out the reaction a quinone + NADH + 5 H(+)(in) = a quinol + NAD(+) + 4 H(+)(out). In terms of biological role, NDH-1 shuttles electrons from NADH, via FMN and iron-sulfur (Fe-S) centers, to quinones in the respiratory chain. The immediate electron acceptor for the enzyme in this species is believed to be ubiquinone. Couples the redox reaction to proton translocation (for every two electrons transferred, four hydrogen ions are translocated across the cytoplasmic membrane), and thus conserves the redox energy in a proton gradient. The polypeptide is NADH-quinone oxidoreductase subunit C/D (Blochmanniella floridana).